The sequence spans 142 residues: Hemoglobin subunit alpha-A (142 aa).

A Globin domain is found at 2 to 142 (VLTAGDKANV…VATALTSKYR (141 aa)). 2 residues coordinate heme b: H59 and H88.

Belongs to the globin family. In terms of assembly, heterotetramer of two alpha-A chains and two beta chains. Red blood cells.

Involved in oxygen transport from the lung to the various peripheral tissues. The sequence is that of Hemoglobin subunit alpha-A from Chelonoidis niger (Galapagos giant tortoise).